Reading from the N-terminus, the 361-residue chain is MKDQRLLDSVPLPNDPDRSLRPQVLDDFIGQEAARANLKIFIEAAKARQEALDHVLFVGPPGLGKTTLSQIMAKELGVNFRSTSGPVIAKSGDLAALLTNLEERDVLFIDEIHRLNPAIEEILYPAMEDYQLDLILGEGPAARSVKIDLAKFTLVAATTRLGLLTTPLRDRFGIPIRLNFYTIEELEYIVQRNARLFSVQISDDGAHEIARRARGTPRIAGRLLRRVCDFALVKRAKKIDRKVADEALSRLEVDHLGLDPLDRRYLLLIAETFLGGPVGIETIAAALSEPRDAIEDIIEPYLLQQGFIQRTARGRILREKAWNHLGLCAPASTISTQKCAQLLNTQDNSSGQTTLWDEADE.

The tract at residues 1–181 (MKDQRLLDSV…FGIPIRLNFY (181 aa)) is large ATPase domain (RuvB-L). ATP contacts are provided by residues leucine 20, arginine 21, glycine 62, lysine 65, threonine 66, threonine 67, 128–130 (EDY), arginine 171, tyrosine 181, and arginine 218. Threonine 66 contributes to the Mg(2+) binding site. A small ATPAse domain (RuvB-S) region spans residues 182 to 252 (TIEELEYIVQ…VADEALSRLE (71 aa)). The head domain (RuvB-H) stretch occupies residues 255–361 (HLGLDPLDRR…QTTLWDEADE (107 aa)). The DNA site is built by arginine 291, arginine 310, and arginine 315.

The protein belongs to the RuvB family. As to quaternary structure, homohexamer. Forms an RuvA(8)-RuvB(12)-Holliday junction (HJ) complex. HJ DNA is sandwiched between 2 RuvA tetramers; dsDNA enters through RuvA and exits via RuvB. An RuvB hexamer assembles on each DNA strand where it exits the tetramer. Each RuvB hexamer is contacted by two RuvA subunits (via domain III) on 2 adjacent RuvB subunits; this complex drives branch migration. In the full resolvosome a probable DNA-RuvA(4)-RuvB(12)-RuvC(2) complex forms which resolves the HJ.

The protein resides in the cytoplasm. The enzyme catalyses ATP + H2O = ADP + phosphate + H(+). Its function is as follows. The RuvA-RuvB-RuvC complex processes Holliday junction (HJ) DNA during genetic recombination and DNA repair, while the RuvA-RuvB complex plays an important role in the rescue of blocked DNA replication forks via replication fork reversal (RFR). RuvA specifically binds to HJ cruciform DNA, conferring on it an open structure. The RuvB hexamer acts as an ATP-dependent pump, pulling dsDNA into and through the RuvAB complex. RuvB forms 2 homohexamers on either side of HJ DNA bound by 1 or 2 RuvA tetramers; 4 subunits per hexamer contact DNA at a time. Coordinated motions by a converter formed by DNA-disengaged RuvB subunits stimulates ATP hydrolysis and nucleotide exchange. Immobilization of the converter enables RuvB to convert the ATP-contained energy into a lever motion, pulling 2 nucleotides of DNA out of the RuvA tetramer per ATP hydrolyzed, thus driving DNA branch migration. The RuvB motors rotate together with the DNA substrate, which together with the progressing nucleotide cycle form the mechanistic basis for DNA recombination by continuous HJ branch migration. Branch migration allows RuvC to scan DNA until it finds its consensus sequence, where it cleaves and resolves cruciform DNA. This is Holliday junction branch migration complex subunit RuvB from Bartonella quintana (strain Toulouse) (Rochalimaea quintana).